The primary structure comprises 239 residues: uncharacterized protein (239 aa).

7 consecutive transmembrane segments (helical) span residues 20–40 (ILIW…WLVL), 48–68 (FSSV…LGLL), 80–100 (WILL…GFHF), 106–126 (IYAM…TYLF), 143–163 (LILL…EILV), 164–184 (MIAG…DILH), and 192–212 (IPGA…VLYF).

Belongs to the cytomegalovirus US12 family.

It localises to the membrane. This is an uncharacterized protein from Homo sapiens (Human).